A 430-amino-acid chain; its full sequence is Trigger factor (430 aa).

The PPIase FKBP-type domain occupies 163–248 (GNIAIIDFKG…VKEIKVKEIP (86 aa)).

This sequence belongs to the FKBP-type PPIase family. Tig subfamily.

It is found in the cytoplasm. The enzyme catalyses [protein]-peptidylproline (omega=180) = [protein]-peptidylproline (omega=0). In terms of biological role, involved in protein export. Acts as a chaperone by maintaining the newly synthesized protein in an open conformation. Functions as a peptidyl-prolyl cis-trans isomerase. This is Trigger factor from Clostridium kluyveri (strain NBRC 12016).